Consider the following 191-residue polypeptide: Large ribosomal subunit protein eL6 (191 aa).

This sequence belongs to the eukaryotic ribosomal protein eL6 family.

This chain is Large ribosomal subunit protein eL6 (RPL6), found in Tetrahymena thermophila (strain SB210).